The following is a 1132-amino-acid chain: Tyrosine-protein kinase JAK2 (1132 aa).

An interaction with cytokine/interferon/growth hormone receptors region spans residues 1-239; that stretch reads MGMACLTMTE…RYRFRRFIQQ (239 aa). Residues 37-380 enclose the FERM domain; it reads PVLQVYLYHS…GYYRLTADAH (344 aa). The residue at position 119 (Y119) is a Phosphotyrosine; by autocatalysis. Phosphotyrosine is present on residues Y372 and Y373. Residues 401 to 482 enclose the SH2; atypical domain; sequence HGPISMDFAI…NLKDLLNCYQ (82 aa). S523 is subject to Phosphoserine. In terms of domain architecture, Protein kinase 1 spans 545–809; that stretch reads LIFNESLGQG…AVIRDLNSLF (265 aa). A phosphotyrosine mark is found at Y570 and Y813. The Protein kinase 2 domain occupies 849-1124; it reads LKFLQQLGKG…SFRDLSLRVD (276 aa). 855 to 863 is an ATP binding site; it reads LGKGNFGSV. Residue Y868 is modified to Phosphotyrosine; by autocatalysis. K882 contributes to the ATP binding site. Phosphotyrosine; by autocatalysis occurs at positions 966 and 972. The Proton acceptor role is filled by D976. 2 positions are modified to phosphotyrosine; by autocatalysis: Y1007 and Y1008.

The protein belongs to the protein kinase superfamily. Tyr protein kinase family. JAK subfamily. In terms of assembly, interacts with IL23R, SKB1 and STAM2. Interacts with EPOR. Interacts with LYN. Interacts with SIRPA. Interacts with SH2B1. Interacts with TEC. Interacts with IFNGR2 (via intracellular domain). Interacts with LEPR (Isoform B). Interacts with HSP90AB1; promotes functional activation in a heat shock-dependent manner. Interacts with STRA6. Interacts with ASB2; the interaction targets JAK2 for Notch-induced proteasomal degradation. Interacts with MPL/TPOR. The cofactor is Mg(2+). Autophosphorylated, leading to regulate its activity. Leptin promotes phosphorylation on tyrosine residues, including phosphorylation on Tyr-813. Autophosphorylation on Tyr-119 in response to EPO down-regulates its kinase activity. Autophosphorylation on Tyr-868, Tyr-966 and Tyr-972 in response to growth hormone (GH) are required for maximal kinase activity. Also phosphorylated by TEC. Phosphorylated on tyrosine residues in response to interferon gamma signaling. Phosphorylated on tyrosine residues in response to a signaling cascade that is activated by increased cellular retinol. Post-translationally, undergoes Notch-induced ubiquitination and subsequent proteasomal degradation which is mediated by ASB1 or ASB2, the substrate-recognition components of probable ECS E3 ubiquitin-protein ligase complexes. Ubiquitously expressed throughout most tissues.

Its subcellular location is the endomembrane system. It localises to the cytoplasm. It is found in the nucleus. The catalysed reaction is L-tyrosyl-[protein] + ATP = O-phospho-L-tyrosyl-[protein] + ADP + H(+). Regulated by autophosphorylation, can both activate or decrease activity. Heme regulates its activity by enhancing the phosphorylation on Tyr-1007 and Tyr-1008. Non-receptor tyrosine kinase involved in various processes such as cell growth, development, differentiation or histone modifications. Mediates essential signaling events in both innate and adaptive immunity. In the cytoplasm, plays a pivotal role in signal transduction via its association with type I receptors such as growth hormone (GHR), prolactin (PRLR), leptin (LEPR), erythropoietin (EPOR), thrombopoietin receptor (MPL/TPOR); or type II receptors including IFN-alpha, IFN-beta, IFN-gamma and multiple interleukins. Following ligand-binding to cell surface receptors, phosphorylates specific tyrosine residues on the cytoplasmic tails of the receptor, creating docking sites for STATs proteins. Subsequently, phosphorylates the STATs proteins once they are recruited to the receptor. Phosphorylated STATs then form homodimer or heterodimers and translocate to the nucleus to activate gene transcription. For example, cell stimulation with erythropoietin (EPO) during erythropoiesis leads to JAK2 autophosphorylation, activation, and its association with erythropoietin receptor (EPOR) that becomes phosphorylated in its cytoplasmic domain. Then, STAT5 (STAT5A or STAT5B) is recruited, phosphorylated and activated by JAK2. Once activated, dimerized STAT5 translocates into the nucleus and promotes the transcription of several essential genes involved in the modulation of erythropoiesis. Part of a signaling cascade that is activated by increased cellular retinol and that leads to the activation of STAT5 (STAT5A or STAT5B). In addition, JAK2 mediates angiotensin-2-induced ARHGEF1 phosphorylation. Plays a role in cell cycle by phosphorylating CDKN1B. Cooperates with TEC through reciprocal phosphorylation to mediate cytokine-driven activation of FOS transcription. In the nucleus, plays a key role in chromatin by specifically mediating phosphorylation of 'Tyr-41' of histone H3 (H3Y41ph), a specific tag that promotes exclusion of CBX5 (HP1 alpha) from chromatin. Up-regulates the potassium voltage-gated channel activity of KCNA3. The polypeptide is Tyrosine-protein kinase JAK2 (Mus musculus (Mouse)).